Consider the following 335-residue polypeptide: Deoxyhypusine hydroxylase (335 aa).

5 HEAT-like PBS-type repeats span residues 71-97, 104-130, 200-233, 238-264, and 271-298; these read LKHE…VVKD, CRHE…LRDN, QRYR…GLKD, FRHE…ALSD, and VRHE…FLND. Fe cation-binding residues include H73, E74, H106, and E107. Residues H240, E241, H273, and E274 each contribute to the Fe cation site.

Belongs to the deoxyhypusine hydroxylase family. The cofactor is Fe(2+).

It is found in the cytoplasm. The protein localises to the nucleus. It catalyses the reaction [eIF5A protein]-deoxyhypusine + AH2 + O2 = [eIF5A protein]-hypusine + A + H2O. It functions in the pathway protein modification; eIF5A hypusination. Catalyzes the hydroxylation of the N(6)-(4-aminobutyl)-L-lysine intermediate to form hypusine, an essential post-translational modification only found in mature eIF-5A factor. The chain is Deoxyhypusine hydroxylase (lia1) from Aspergillus clavatus (strain ATCC 1007 / CBS 513.65 / DSM 816 / NCTC 3887 / NRRL 1 / QM 1276 / 107).